The sequence spans 583 residues: Malonate--CoA ligase ACSF3, mitochondrial (583 aa).

A mitochondrion-targeting transit peptide spans 1-27; that stretch reads MPPHLALPFRRLFWSLASSQLIPRRHR. ATP-binding positions include 202–210, Asp-455, Arg-469, and Lys-561; that span reads TSGTTGRPK.

This sequence belongs to the ATP-dependent AMP-binding enzyme family.

The protein resides in the mitochondrion. It catalyses the reaction tetracosanoate + ATP + CoA = tetracosanoyl-CoA + AMP + diphosphate. The enzyme catalyses malonate + ATP + CoA = malonyl-CoA + AMP + diphosphate. Its function is as follows. Catalyzes the initial reaction in intramitochondrial fatty acid synthesis, by activating malonate and methylmalonate, but not acetate, into their respective CoA thioester. May have some preference toward very-long-chain substrates. The sequence is that of Malonate--CoA ligase ACSF3, mitochondrial from Mus musculus (Mouse).